We begin with the raw amino-acid sequence, 361 residues long: Aromatic amino acid aminotransferase (361 aa).

An N6-(pyridoxal phosphate)lysine modification is found at K221.

Belongs to the class-II pyridoxal-phosphate-dependent aminotransferase family. In terms of assembly, homodimer. Pyridoxal 5'-phosphate serves as cofactor.

The enzyme catalyses an aromatic L-alpha-amino acid + 2-oxoglutarate = an aromatic oxo-acid + L-glutamate. Functionally, aminotransferase that catalyzes the conversion of aromatic amino acids and 2-oxoglutarate into corresponding aromatic oxo acids and L-glutamate. This is Aromatic amino acid aminotransferase from Mycobacterium marinum (strain ATCC BAA-535 / M).